A 346-amino-acid polypeptide reads, in one-letter code: Nitrilase 1 (346 aa).

Serine 2 is modified (N-acetylserine). The CN hydrolase domain maps to 25–297 (VRVTIVQSST…EGLVTADIDL (273 aa)). The active-site Proton acceptor is the glutamate 65. Lysine 152 acts as the Proton donor in catalysis. Cysteine 186 (nucleophile) is an active-site residue.

The protein belongs to the carbon-nitrogen hydrolase superfamily. Nitrilase family. As to quaternary structure, interacts with DEK3. As to expression, expressed in cotyledons, hypocotyls, leaves, roots, stems, flowers and siliques.

The catalysed reaction is a nitrile + 2 H2O = a carboxylate + NH4(+). Its function is as follows. Can convert indole-3-acetonitrile to the plant hormone indole-3-acetic acid. The sequence is that of Nitrilase 1 from Arabidopsis thaliana (Mouse-ear cress).